Consider the following 249-residue polypeptide: UPF0758 protein Oant_1909 (249 aa).

In terms of domain architecture, MPN spans 127 to 249; the sequence is VLGSWNKVIE…HASFRGLGLI (123 aa). Histidine 198, histidine 200, and aspartate 211 together coordinate Zn(2+). Residues 198–211 carry the JAMM motif motif; it reads HNHPSGDPTPSRAD.

It belongs to the UPF0758 family.

The protein is UPF0758 protein Oant_1909 of Brucella anthropi (strain ATCC 49188 / DSM 6882 / CCUG 24695 / JCM 21032 / LMG 3331 / NBRC 15819 / NCTC 12168 / Alc 37) (Ochrobactrum anthropi).